We begin with the raw amino-acid sequence, 593 residues long: UvrABC system protein C (593 aa).

The region spanning 17-94 (MEPGCYLMKD…IKQYQPRYNI (78 aa)) is the GIY-YIG domain. The region spanning 199–234 (KTILKSLEERMLTASESLDFERAKEYRDLIQHIQNL) is the UVR domain.

Belongs to the UvrC family. In terms of assembly, interacts with UvrB in an incision complex.

The protein resides in the cytoplasm. The UvrABC repair system catalyzes the recognition and processing of DNA lesions. UvrC both incises the 5' and 3' sides of the lesion. The N-terminal half is responsible for the 3' incision and the C-terminal half is responsible for the 5' incision. This is UvrABC system protein C from Staphylococcus aureus (strain Mu3 / ATCC 700698).